Reading from the N-terminus, the 303-residue chain is MADLSVNIGKLQMKNPVMTASGTFGYGEEFADFIDITRIGGIIVKGTTLHKREGNPYPRMAETPSGMLNAVGLQNKGVEYFSNHIYPRIKDIQTHMIVNVSGSAIEDYVKTAEIINELDKIPAIELNISCPNVKQGGMAFGVTTKGVSEVVQAVRSAYKKTLIVKLSPNVTDIAEMARAAEANGADSVSLINTLLGMAIDAERKRPILSTVTGGMSGAAVKPIALRMVWQVAKAVNIPVIGLGGIMNWKDAVEFMLAGASAIQIGTANFIDPAITIKVIDGINDYLERHGCKSVSEIIGALEV.

FMN-binding positions include Ser-21 and 45 to 46 (KG). Substrate-binding positions include Lys-45 and 69–73 (NAVGL). FMN contacts are provided by Asn-99 and Asn-127. Asn-127 contacts substrate. Cys-130 (nucleophile) is an active-site residue. Lys-165 and Ile-191 together coordinate FMN. 192 to 193 (NT) contacts substrate. Residues Gly-217, 243–244 (GG), and 265–266 (GT) contribute to the FMN site.

This sequence belongs to the dihydroorotate dehydrogenase family. Type 1 subfamily. Heterotetramer of 2 PyrK and 2 PyrD type B subunits. Requires FMN as cofactor.

The protein localises to the cytoplasm. It catalyses the reaction (S)-dihydroorotate + NAD(+) = orotate + NADH + H(+). It functions in the pathway pyrimidine metabolism; UMP biosynthesis via de novo pathway; orotate from (S)-dihydroorotate (NAD(+) route): step 1/1. Functionally, catalyzes the conversion of dihydroorotate to orotate with NAD(+) as electron acceptor. This chain is Dihydroorotate dehydrogenase B (NAD(+)), catalytic subunit (pyrD), found in Bacteroides fragilis (strain ATCC 25285 / DSM 2151 / CCUG 4856 / JCM 11019 / LMG 10263 / NCTC 9343 / Onslow / VPI 2553 / EN-2).